The primary structure comprises 152 residues: Large ribosomal subunit protein bL9 (152 aa).

The protein belongs to the bacterial ribosomal protein bL9 family.

Binds to the 23S rRNA. This is Large ribosomal subunit protein bL9 from Nostoc punctiforme (strain ATCC 29133 / PCC 73102).